A 185-amino-acid chain; its full sequence is Large ribosomal subunit protein uL5 (185 aa).

The protein belongs to the universal ribosomal protein uL5 family. As to quaternary structure, part of the 50S ribosomal subunit; part of the 5S rRNA subcomplex. Contacts the 5S rRNA and the P site tRNA. Forms a bridge to the 30S subunit in the 70S ribosome. Post-translationally, both N-terminus methionine truncation and retention have been observed for this protein. In terms of processing, may be methylated twice, on undetermined residues.

Its function is as follows. This is one of the proteins that bind and probably mediate the attachment of the 5S RNA into the large ribosomal subunit, where it forms part of the central protuberance. In the 70S ribosome it contacts protein S13 of the 30S subunit (bridge B1b), connecting the 2 subunits; this bridge is implicated in subunit movement. Contacts the P site tRNA; the 5S rRNA and some of its associated proteins might help stabilize positioning of ribosome-bound tRNAs. The sequence is that of Large ribosomal subunit protein uL5 from Rhodopseudomonas palustris (strain ATCC BAA-98 / CGA009).